The chain runs to 545 residues: Chaperonin GroEL 3 (545 aa).

Residues Thr29–Pro32, Asp86–Thr90, Gly413, Asp479–Val481, and Asp495 each bind ATP. The tract at residues Asp526–Tyr545 is disordered. Residues Val535–Tyr545 are compositionally biased toward gly residues.

The protein belongs to the chaperonin (HSP60) family. In terms of assembly, forms a cylinder of 14 subunits composed of two heptameric rings stacked back-to-back. Interacts with the co-chaperonin GroES.

The protein localises to the cytoplasm. The catalysed reaction is ATP + H2O + a folded polypeptide = ADP + phosphate + an unfolded polypeptide.. Together with its co-chaperonin GroES, plays an essential role in assisting protein folding. The GroEL-GroES system forms a nano-cage that allows encapsulation of the non-native substrate proteins and provides a physical environment optimized to promote and accelerate protein folding. This chain is Chaperonin GroEL 3, found in Trichormus variabilis (strain ATCC 29413 / PCC 7937) (Anabaena variabilis).